We begin with the raw amino-acid sequence, 587 residues long: Phosphatidylinositol-3-phosphatase SAC1 (587 aa).

At methionine 1–lysine 520 the chain is on the cytoplasmic side. Residues leucine 122–glycine 451 form the SAC domain. An essential for phosphatidylinositol-4-phosphate phosphatase activity region spans residues threonine 452–aspartate 587. Lysine 456 bears the N6-acetyllysine mark. Residues phenylalanine 521–methionine 541 traverse the membrane as a helical segment. The Lumenal portion of the chain corresponds to alanine 542–glutamate 548. The helical transmembrane segment at threonine 549–tyrosine 569 threads the bilayer. Residues asparagine 570–aspartate 587 lie on the Cytoplasmic side of the membrane.

In terms of assembly, interacts with TMEM39A. Interacts with SEC23A and SEC24A; this interaction is reduced in the absence of TMEM39A. Interacts with PLEKHA3 and VAPA and/or VAPB to form a ternary complex.

Its subcellular location is the endoplasmic reticulum membrane. It is found in the golgi apparatus membrane. It carries out the reaction a 1,2-diacyl-sn-glycero-3-phospho-(1D-myo-inositol-3-phosphate) + H2O = a 1,2-diacyl-sn-glycero-3-phospho-(1D-myo-inositol) + phosphate. The catalysed reaction is a 1,2-diacyl-sn-glycero-3-phospho-(1D-myo-inositol 4-phosphate) + H2O = a 1,2-diacyl-sn-glycero-3-phospho-(1D-myo-inositol) + phosphate. Functionally, phosphoinositide phosphatase which catalyzes the hydrolysis of phosphatidylinositol 4-phosphate (PtdIns(4)P), phosphatidylinositol 3-phosphate (PtdIns(3)P) and has low activity towards phosphatidylinositol-3,5-bisphosphate (PtdIns(3,5)P2). Shows a very robust PtdIns(4)P phosphatase activity when it binds PtdIns(4)P in a 'cis' configuration in the cellular environment, with much less activity seen when it binds PtdIns(4)P in 'trans' configuration. PtdIns(4)P phosphatase activity (when it binds PtdIns(4)P in 'trans' configuration) is enhanced in the presence of PLEKHA3. The chain is Phosphatidylinositol-3-phosphatase SAC1 (SACM1L) from Pongo abelii (Sumatran orangutan).